A 244-amino-acid chain; its full sequence is tRNA pseudouridine synthase A (244 aa).

Asp-52 acts as the Nucleophile in catalysis. Tyr-110 contacts substrate.

Belongs to the tRNA pseudouridine synthase TruA family. In terms of assembly, homodimer.

The enzyme catalyses uridine(38/39/40) in tRNA = pseudouridine(38/39/40) in tRNA. Its function is as follows. Formation of pseudouridine at positions 38, 39 and 40 in the anticodon stem and loop of transfer RNAs. The sequence is that of tRNA pseudouridine synthase A from Geotalea uraniireducens (strain Rf4) (Geobacter uraniireducens).